An 824-amino-acid chain; its full sequence is C-Jun-amino-terminal kinase-interacting protein 2 (824 aa).

Disordered stretches follow at residues 1 to 28, 40 to 160, 172 to 349, and 361 to 501; these read MADR…QDIS, ITDD…GFDL, CSPA…DSPW, and EGSS…APRD. Over residues 77-110 the composition is skewed to acidic residues; sequence DFQEFEMIDDNEEEDDEDEEEEEEEEEGDGEGQE. Residues 110–275 are JNK-binding domain (JBD); sequence EGGDPGSEAP…RMISSISETE (166 aa). Residues 141–156 are compositionally biased toward polar residues; sequence LRLTTLGAQDSLNNNG. Positions 239–498 are necessary for interaction with FGF13; that stretch reads GRGGRRSSQE…PGGRGTGPSA (260 aa). Serine 254, serine 302, and serine 305 each carry phosphoserine. Residues 268 to 305 show a composition bias toward low complexity; the sequence is ISSISETELELSSDGGSSSSGRSSHLTNSIEEASSPAS. The segment covering 327 to 346 has biased composition (acidic residues); sequence TNSEYESGSESEPDLSEDAD. The segment covering 416–432 has biased composition (pro residues); the sequence is APPPPAPAAPRPGPAQP. Low complexity predominate over residues 451–467; sequence AAPGRAARPGRACSAAC. A compositionally biased stretch (acidic residues) spans 468-484; sequence SEEEDEEDDEEEEDAED. Positions 604 to 665 constitute an SH3 domain; it reads EREQTHRAVF…PAFYAHAVPG (62 aa). The PID domain occupies 677–813; the sequence is PCWVERFDVQ…FLEYYQEHLA (137 aa).

It belongs to the JIP scaffold family. As to quaternary structure, forms homo- or heterooligomeric complexes. Binds specific components of the JNK signaling pathway namely JNK1, JNK2, JNK3, MAP2K7, MAP3K10, MAP3K11, MAP3K12 and MAPK13. Also binds the proline-rich domain-containing splice variant of apolipoprotein E receptor 2 (ApoER2). Binds the cytoplasmic tails of LRP1 and LRP2 (Megalin). Binds the TPR motif-containing C-terminal of kinesin light chain, Klc1, pre-assembled MAPK8IP1 scaffolding complexes are then transported as a cargo of kinesin, to the required subcellular location. Interacts with the cytoplasmic domain of APP. Interacts with DCLK2. Interacts with TIAM1 and TIAM2. Interacts with FGF13; enables the interaction with MAPK13 and may regulate the MAPK8IP2 scaffolding activity. Interacts with SH3RF2. Expressed mainly in the brain and pancreas, including insulin-secreting cells. In the nervous system, more abundantly expressed in the cerebellum, pituitary gland, occipital lobe and the amygdala. Also expressed in fetal brain. Very low levels found in uterus, ovary, prostate, colon, testis, adrenal gland, thyroid gland and salivary gland.

It localises to the cytoplasm. Its function is as follows. The JNK-interacting protein (JIP) group of scaffold proteins selectively mediates JNK signaling by aggregating specific components of the MAPK cascade to form a functional JNK signaling module. JIP2 inhibits IL1 beta-induced apoptosis in insulin-secreting cells. May function as a regulator of vesicle transport, through interactions with the JNK-signaling components and motor proteins. In Homo sapiens (Human), this protein is C-Jun-amino-terminal kinase-interacting protein 2 (MAPK8IP2).